A 1008-amino-acid polypeptide reads, in one-letter code: PAN2-PAN3 deadenylation complex catalytic subunit PAN2 (1008 aa).

WD repeat units follow at residues 29 to 68 (GQLT…PYSR), 110 to 149 (PSLG…VTRV), 158 to 198 (HMAG…FSDV), 200 to 236 (VQDN…AMAP), and 277 to 316 (AEVA…SFAE). The segment at 314 to 449 (FAEFSAPTAF…TCTEASMSSK (136 aa)) is linker. The region spanning 450-755 (KVPRLYRKLE…RTVMMVYAVG (306 aa)) is the USP domain. Residues 808 to 976 (AIDAEFVVLK…EDSHTALLLY (169 aa)) enclose the Exonuclease domain. 4 residues coordinate a divalent metal cation: aspartate 810, glutamate 812, aspartate 915, and aspartate 968.

It belongs to the peptidase C19 family. PAN2 subfamily. As to quaternary structure, forms a heterotrimer with an asymmetric homodimer of the regulatory subunit PAN3 to form the poly(A)-nuclease (PAN) deadenylation complex. A divalent metal cation is required as a cofactor.

The protein resides in the cytoplasm. The catalysed reaction is Exonucleolytic cleavage of poly(A) to 5'-AMP.. Its activity is regulated as follows. Positively regulated by the regulatory subunit PAN3. Its function is as follows. Catalytic subunit of the poly(A)-nuclease (PAN) deadenylation complex, one of two cytoplasmic mRNA deadenylases involved in mRNA turnover. PAN specifically shortens poly(A) tails of RNA and the activity is stimulated by poly(A)-binding protein PAB1. PAN deadenylation is followed by rapid degradation of the shortened mRNA tails by the CCR4-NOT complex. Deadenylated mRNAs are then degraded by two alternative mechanisms, namely exosome-mediated 3'-5' exonucleolytic degradation, or deadenylation-dependent mRNA decaping and subsequent 5'-3' exonucleolytic degradation by XRN1. May also be involved in post-transcriptional maturation of mRNA poly(A) tails. The chain is PAN2-PAN3 deadenylation complex catalytic subunit PAN2 from Yarrowia lipolytica (strain CLIB 122 / E 150) (Yeast).